Here is a 388-residue protein sequence, read N- to C-terminus: Carbamoyl phosphate synthase small chain (388 aa).

Residues 1–198 are CPSase; it reads MSQDLLPGVT…WPEGYAKLDK (198 aa). Positions 53, 250, and 252 each coordinate L-glutamine. The 187-residue stretch at 202-388 folds into the Glutamine amidotransferase type-1 domain; the sequence is EVVVIDYGVK…RFAGLMDAAK (187 aa). The active-site Nucleophile is the C279. L-glutamine contacts are provided by L280, Q283, N321, G323, and F324. Catalysis depends on residues H363 and E365.

Belongs to the CarA family. In terms of assembly, composed of two chains; the small (or glutamine) chain promotes the hydrolysis of glutamine to ammonia, which is used by the large (or ammonia) chain to synthesize carbamoyl phosphate. Tetramer of heterodimers (alpha,beta)4.

It catalyses the reaction hydrogencarbonate + L-glutamine + 2 ATP + H2O = carbamoyl phosphate + L-glutamate + 2 ADP + phosphate + 2 H(+). The enzyme catalyses L-glutamine + H2O = L-glutamate + NH4(+). Its pathway is amino-acid biosynthesis; L-arginine biosynthesis; carbamoyl phosphate from bicarbonate: step 1/1. It participates in pyrimidine metabolism; UMP biosynthesis via de novo pathway; (S)-dihydroorotate from bicarbonate: step 1/3. Its function is as follows. Small subunit of the glutamine-dependent carbamoyl phosphate synthetase (CPSase). CPSase catalyzes the formation of carbamoyl phosphate from the ammonia moiety of glutamine, carbonate, and phosphate donated by ATP, constituting the first step of 2 biosynthetic pathways, one leading to arginine and/or urea and the other to pyrimidine nucleotides. The small subunit (glutamine amidotransferase) binds and cleaves glutamine to supply the large subunit with the substrate ammonia. The chain is Carbamoyl phosphate synthase small chain from Caulobacter vibrioides (strain ATCC 19089 / CIP 103742 / CB 15) (Caulobacter crescentus).